We begin with the raw amino-acid sequence, 148 residues long: UPF0179 protein Ta1159 (148 aa).

The protein belongs to the UPF0179 family.

This chain is UPF0179 protein Ta1159, found in Thermoplasma acidophilum (strain ATCC 25905 / DSM 1728 / JCM 9062 / NBRC 15155 / AMRC-C165).